The sequence spans 129 residues: UPF0325 protein PC1_0937 (129 aa).

Belongs to the UPF0325 family.

In Pectobacterium carotovorum subsp. carotovorum (strain PC1), this protein is UPF0325 protein PC1_0937.